Here is a 436-residue protein sequence, read N- to C-terminus: 3-ketoacyl-CoA thiolase (436 aa).

Residue C99 is the Acyl-thioester intermediate of the active site. Residues H392 and C422 each act as proton acceptor in the active site.

The protein belongs to the thiolase-like superfamily. Thiolase family. As to quaternary structure, heterotetramer of two alpha chains (FadJ) and two beta chains (FadI).

The protein resides in the cytoplasm. The enzyme catalyses an acyl-CoA + acetyl-CoA = a 3-oxoacyl-CoA + CoA. The protein operates within lipid metabolism; fatty acid beta-oxidation. Its function is as follows. Catalyzes the final step of fatty acid oxidation in which acetyl-CoA is released and the CoA ester of a fatty acid two carbons shorter is formed. This is 3-ketoacyl-CoA thiolase from Shewanella loihica (strain ATCC BAA-1088 / PV-4).